The chain runs to 649 residues: V-type ATP synthase subunit I (649 aa).

7 consecutive transmembrane segments (helical) span residues 312–332 (FFSF…GLVF), 360–380 (FMIL…FFGV), 453–473 (FIDN…LSLG), 485–505 (IGWV…LQAV), 520–540 (GLVG…GGVI), 556–576 (VFSD…GAMV), and 593–613 (ILII…GGVI).

This sequence belongs to the V-ATPase 116 kDa subunit family.

It localises to the cell membrane. Its function is as follows. Produces ATP from ADP in the presence of a proton gradient across the membrane. The polypeptide is V-type ATP synthase subunit I (atpI) (Chlamydia trachomatis serovar D (strain ATCC VR-885 / DSM 19411 / UW-3/Cx)).